A 210-amino-acid polypeptide reads, in one-letter code: Oxygen-insensitive NADPH nitroreductase (210 aa).

Position 150–155 (150–155) interacts with NADP(+); it reads GVSLMG.

It belongs to the nitroreductase family.

Its function is as follows. Reduction of a variety of nitroaromatic compounds using NADPH as source of reducing equivalents; two electrons are transferred. Capable of reducing metronidazole; inactive RdxA renders the bacterium resistant to this compound. The reduction of metronidazole generates hydroxylamine, a potent mutagen and bactericide. In Helicobacter pylori (strain ATCC 700392 / 26695) (Campylobacter pylori), this protein is Oxygen-insensitive NADPH nitroreductase (rdxA).